The sequence spans 196 residues: uncharacterized protein (196 aa).

The HTH cro/C1-type domain occupies 12–66; it reads LRAAREAQKMSQRELSARSGLTQSHISQIERGTMEPGLGSLVDVARALDLEIVLA. A DNA-binding region (H-T-H motif) is located at residues 23-42; it reads QRELSARSGLTQSHISQIER. The disordered stretch occupies residues 174-196; that stretch reads VHRDRDDAVPRSAYALDEEDDNA.

This is an uncharacterized protein from Sinorhizobium fredii (strain NBRC 101917 / NGR234).